Here is a 138-residue protein sequence, read N- to C-terminus: MAKPILRIGSRKNTRSGSRKNVRRIPKGVIHVQASFNNTIVTVTDVRGRVISWSSAGTCGFRGTRRGTPFAAQTAAGNAIRAVVDQGMQRAEVRIKGPGLGRDAALRAIRRSGILLSFVRDVTPMPHNGCRPPKKRRV.

Positions 1–23 (MAKPILRIGSRKNTRSGSRKNVR) are disordered. Over residues 9-23 (GSRKNTRSGSRKNVR) the composition is skewed to basic residues.

Belongs to the universal ribosomal protein uS11 family. Part of the 30S ribosomal subunit.

It is found in the plastid. The protein localises to the chloroplast. This Crucihimalaya wallichii (Rock-cress) protein is Small ribosomal subunit protein uS11c.